The following is a 194-amino-acid chain: uncharacterized protein (194 aa).

This sequence belongs to the mimivirus R457/R459 family.

It localises to the virion. This is an uncharacterized protein from Acanthamoeba polyphaga mimivirus (APMV).